The primary structure comprises 371 residues: Probable alcohol acetyltransferase (371 aa).

Residues Ser124 and His295 each act as charge relay system in the active site. Positions 325-352 (AKALEESPKESYSRPPAHQQPLHKNDFT) are disordered. A compositionally biased stretch (basic and acidic residues) spans 327 to 336 (ALEESPKESY).

The protein belongs to the AB hydrolase superfamily.

Functionally, probable alcohol acetyltransferase that uses acetyl-CoA to synthesize acetate esters from various alcohols. Not involved in the synthesis of ethyl acetate. This is Probable alcohol acetyltransferase (EAT2) from Cyberlindnera fabianii (Yeast).